Reading from the N-terminus, the 307-residue chain is DDRGK domain-containing protein 1 (307 aa).

The Lumenal segment spans residues 1–2 (MD). Residues 3 to 23 (LILLVGIAVALLVILATLYFL) traverse the membrane as a helical segment. Topologically, residues 24 to 307 (QNKNKAAGEA…PVQSAAGGDS (284 aa)) are cytoplasmic. Low complexity-rich tracts occupy residues 32-43 (EAKPAAAAPRRG) and 54-83 (RRAQIARNQRNRLQQNAPAPAPEAVAPAAA). A disordered region spans residues 32 to 162 (EAKPAAAAPR…EEVEAEAERK (131 aa)). The segment covering 117-162 (KMEAKEQKRLQREHELQEREKRKVKEAKEDAERKQQEEVEAEAERK) has biased composition (basic and acidic residues).

Belongs to the DDRGK1 family. As to quaternary structure, interacts with Atg9; the interaction is transient.

The protein localises to the endoplasmic reticulum membrane. Substrate adapter for ufmylation, the covalent attachment of the ubiquitin-like modifier UFM1 to substrate proteins. Required for ufmylation of Atg9; protects the nervous system during aging, possibly by stabilizing Atg9 and supporting its function. This is DDRGK domain-containing protein 1 from Drosophila willistoni (Fruit fly).